A 192-amino-acid chain; its full sequence is Visinin (192 aa).

Residue glycine 2 is the site of N-myristoyl glycine attachment. 4 consecutive EF-hand domains span residues 24–59, 61–96, 97–132, and 146–181; these read TEEE…FFPN, EPQG…TSSG, KTHL…IFKM, and NSPQ…KNDA. The Ca(2+) site is built by aspartate 74, asparagine 76, aspartate 78, threonine 80, glutamate 85, aspartate 110, aspartate 112, asparagine 114, glutamate 116, glutamate 121, asparagine 164, lysine 166, and glutamate 171.

This sequence belongs to the recoverin family. As to expression, retinal cell specific protein.

In terms of biological role, seems to be implicated in the pathway from retinal rod guanylate cyclase to rhodopsin. May be involved in the blocking of the phosphorylation of rhodopsin. This Gallus gallus (Chicken) protein is Visinin.